We begin with the raw amino-acid sequence, 149 residues long: Large ribosomal subunit protein bL9 (149 aa).

This sequence belongs to the bacterial ribosomal protein bL9 family.

In terms of biological role, binds to the 23S rRNA. The sequence is that of Large ribosomal subunit protein bL9 from Stenotrophomonas maltophilia (strain K279a).